The sequence spans 400 residues: Snake venom metalloproteinase H3 (400 aa).

An N-terminal signal peptide occupies residues 1 to 6 (FPYQGS). Residues 7-176 (SIILESGNVN…KKASQLIVST (170 aa)) constitute a propeptide that is removed on maturation. One can recognise a Peptidase M12B domain in the interval 180–377 (KYMEIVIVVD…ENPPCILNKP (198 aa)). The Ca(2+) site is built by Glu-183 and Asp-267. Intrachain disulfides connect Cys-291–Cys-372, Cys-331–Cys-356, and Cys-333–Cys-339. Position 316 (His-316) interacts with Zn(2+). Glu-317 is a catalytic residue. Residues His-320 and His-326 each contribute to the Zn(2+) site. Positions 372, 375, 387, 390, 392, 394, and 400 each coordinate Ca(2+). The propeptide occupies 378–400 (LRTDTVSTPVSGNELLEAGKDYD).

This sequence belongs to the venom metalloproteinase (M12B) family. P-I subfamily. In terms of assembly, monomer. The cofactor is Zn(2+). Expressed by the venom gland.

It is found in the secreted. Functionally, snake venom metalloproteinase that impairs hemostasis in the envenomed animal. This Deinagkistrodon acutus (Hundred-pace snake) protein is Snake venom metalloproteinase H3.